Here is a 156-residue protein sequence, read N- to C-terminus: ATP synthase subunit b 2 (156 aa).

A helical transmembrane segment spans residues 11–31 (LLAFIFFVWFCMKFVWPPIMG).

This sequence belongs to the ATPase B chain family. As to quaternary structure, F-type ATPases have 2 components, F(1) - the catalytic core - and F(0) - the membrane proton channel. F(1) has five subunits: alpha(3), beta(3), gamma(1), delta(1), epsilon(1). F(0) has three main subunits: a(1), b(2) and c(10-14). The alpha and beta chains form an alternating ring which encloses part of the gamma chain. F(1) is attached to F(0) by a central stalk formed by the gamma and epsilon chains, while a peripheral stalk is formed by the delta and b chains.

Its subcellular location is the cell inner membrane. F(1)F(0) ATP synthase produces ATP from ADP in the presence of a proton or sodium gradient. F-type ATPases consist of two structural domains, F(1) containing the extramembraneous catalytic core and F(0) containing the membrane proton channel, linked together by a central stalk and a peripheral stalk. During catalysis, ATP synthesis in the catalytic domain of F(1) is coupled via a rotary mechanism of the central stalk subunits to proton translocation. Functionally, component of the F(0) channel, it forms part of the peripheral stalk, linking F(1) to F(0). The protein is ATP synthase subunit b 2 of Pseudoalteromonas atlantica (strain T6c / ATCC BAA-1087).